A 550-amino-acid chain; its full sequence is Envelope glycoprotein E (550 aa).

A signal peptide spans 1 to 20 (MDRGAVVGFLLGVCVVSCLA). Residues 21–419 (GTPKTSWRRV…HAPPTHGALR (399 aa)) lie on the Virion surface side of the membrane. Residues 63 to 88 (CGPLHPSWVSLMPPKQVPETVVDAAC) are interaction with gI. Asn-124 carries N-linked (GlcNAc...) asparagine; by host glycosylation. Positions 162 to 214 (QPAPVPTPPPTPADYDEDDNDEGEDESLAGTPASGTPRLPPPPAPPRSWPSAP) are disordered. Residues 164–173 (APVPTPPPTP) are compositionally biased toward pro residues. A compositionally biased stretch (acidic residues) spans 175-188 (DYDEDDNDEGEDES). Tyr-176 carries the sulfotyrosine; by host modification. The segment covering 199–209 (RLPPPPAPPRS) has biased composition (pro residues). Positions 235 to 380 (SPGETFSTNV…GHITISTAAQ (146 aa)) are fc-binding. An N-linked (GlcNAc...) asparagine; by host glycan is attached at Asn-243. Cystine bridges form between Cys-271/Cys-297, Cys-280/Cys-289, and Cys-314/Cys-323. The disordered stretch occupies residues 394-413 (GADLAEPTHPHVGAPPHAPP). Low complexity predominate over residues 403–413 (PHVGAPPHAPP). Residues 420-440 (LGAVMGAALLLSALGLSVWAC) form a helical membrane-spanning segment. Over 441 to 550 (MTCWRRRAWR…SQASDSSVFW (110 aa)) the chain is Intravirion. 2 short sequence motifs (internalization motif) span residues 463–466 (YIRV) and 472–475 (YADW). Residues 470 to 495 (ELYADWSSDSEGERDQVPWLAPPERP) are interaction with VP22 and UL11. Phosphoserine; by host CK2 occurs at positions 476 and 477. Residues 476-484 (SSDSEGERD) are acidic. Positions 476 to 550 (SSDSEGERDQ…SQASDSSVFW (75 aa)) are disordered. At Ser-503 the chain carries Phosphoserine. The segment covering 541 to 550 (SQASDSSVFW) has biased composition (polar residues).

It belongs to the alphaherpesvirinae glycoprotein E family. As to quaternary structure, interacts with gI; this interaction enhances the Fc receptor function of gE. The heterodimer gE/gI interacts with the Fc part of host IgG. Interacts (via C-terminus) with VP22 tegument protein; this interaction is necessary for the recruitment of VP22 to the Golgi and its packaging into virions. Interacts (via C-terminus) with UL11 tegument protein. In terms of processing, phosphorylated on serines within the acidic cluster. Phosphorylation determines whether endocytosed viral gE traffics to the trans-Golgi network or recycles to the cell membrane. N-glycosylated, and sulfated.

It localises to the virion membrane. The protein resides in the host cell membrane. It is found in the host cell junction. Its subcellular location is the host Golgi apparatus membrane. The protein localises to the host endosome membrane. In terms of biological role, in epithelial cells, the heterodimer gE/gI is required for the cell-to-cell spread of the virus, by sorting nascent virions to cell junctions. Once the virus reaches the cell junctions, virus particles can spread to adjacent cells extremely rapidly through interactions with cellular receptors that accumulate at these junctions. Implicated in basolateral spread in polarized cells. In neuronal cells, gE/gI is essential for the anterograde spread of the infection throughout the host nervous system. Together with US9, the heterodimer gE/gI is involved in the sorting and transport of viral structural components toward axon tips. Functionally, the heterodimer gE/gI serves as a receptor for the Fc part of host IgG. Dissociation of gE/gI from IgG occurs at acidic pH. May thus be involved in anti-HSV antibodies bipolar bridging, followed by intracellular endocytosis and degradation, thereby interfering with host IgG-mediated immune responses. The polypeptide is Envelope glycoprotein E (gE) (Human herpesvirus 1 (strain 17) (HHV-1)).